Consider the following 860-residue polypeptide: DNA gyrase subunit A (860 aa).

A Topo IIA-type catalytic domain is found at 34–503 (LPDARDGLKP…EDGELIDTDL (470 aa)). Tyr-122 functions as the O-(5'-phospho-DNA)-tyrosine intermediate in the catalytic mechanism. The short motif at 530–536 (QNRATRG) is the GyrA-box element.

It belongs to the type II topoisomerase GyrA/ParC subunit family. As to quaternary structure, heterotetramer, composed of two GyrA and two GyrB chains. In the heterotetramer, GyrA contains the active site tyrosine that forms a transient covalent intermediate with DNA, while GyrB binds cofactors and catalyzes ATP hydrolysis.

Its subcellular location is the cytoplasm. The enzyme catalyses ATP-dependent breakage, passage and rejoining of double-stranded DNA.. Its function is as follows. A type II topoisomerase that negatively supercoils closed circular double-stranded (ds) DNA in an ATP-dependent manner to modulate DNA topology and maintain chromosomes in an underwound state. Negative supercoiling favors strand separation, and DNA replication, transcription, recombination and repair, all of which involve strand separation. Also able to catalyze the interconversion of other topological isomers of dsDNA rings, including catenanes and knotted rings. Type II topoisomerases break and join 2 DNA strands simultaneously in an ATP-dependent manner. The sequence is that of DNA gyrase subunit A from Synechocystis sp. (strain ATCC 27184 / PCC 6803 / Kazusa).